Consider the following 332-residue polypeptide: Fructose-1,6-bisphosphatase class 1 (332 aa).

Mg(2+) contacts are provided by glutamate 94, aspartate 116, leucine 118, and aspartate 119. Residues 119 to 122 (DGSS), asparagine 211, tyrosine 239, 257 to 259 (YLY), and lysine 269 each bind substrate. Glutamate 275 contacts Mg(2+).

This sequence belongs to the FBPase class 1 family. Homotetramer. It depends on Mg(2+) as a cofactor.

It is found in the cytoplasm. The catalysed reaction is beta-D-fructose 1,6-bisphosphate + H2O = beta-D-fructose 6-phosphate + phosphate. The protein operates within carbohydrate biosynthesis; Calvin cycle. In Synechococcus sp. (strain JA-2-3B'a(2-13)) (Cyanobacteria bacterium Yellowstone B-Prime), this protein is Fructose-1,6-bisphosphatase class 1.